Here is a 212-residue protein sequence, read N- to C-terminus: Large ribosomal subunit protein bL25 (212 aa).

Residues 1 to 16 (MKTRIDLTVEPRETGK) are compositionally biased toward basic and acidic residues. The tract at residues 1–22 (MKTRIDLTVEPRETGKHNSRGL) is disordered.

Belongs to the bacterial ribosomal protein bL25 family. CTC subfamily. As to quaternary structure, part of the 50S ribosomal subunit; part of the 5S rRNA/L5/L18/L25 subcomplex. Contacts the 5S rRNA. Binds to the 5S rRNA independently of L5 and L18.

Functionally, this is one of the proteins that binds to the 5S RNA in the ribosome where it forms part of the central protuberance. The polypeptide is Large ribosomal subunit protein bL25 (Bdellovibrio bacteriovorus (strain ATCC 15356 / DSM 50701 / NCIMB 9529 / HD100)).